The primary structure comprises 101 residues: MSDKTLTRADLAESVYREVGLSRQESADLVQSVLAMVSDNLAAGQSVKLSSFGSFLLRDKRGRVGRNPKTGVEVPIDARRVLVFKPSQVLKERVDSALSKD.

Belongs to the bacterial histone-like protein family. As to quaternary structure, heterodimer of an alpha and a beta chain.

Functionally, this protein is one of the two subunits of integration host factor, a specific DNA-binding protein that functions in genetic recombination as well as in transcriptional and translational control. In Maricaulis maris (strain MCS10) (Caulobacter maris), this protein is Integration host factor subunit alpha.